Consider the following 493-residue polypeptide: Glutamate--tRNA ligase (493 aa).

The 'HIGH' region motif lies at 10–20; the sequence is PSPTGDPHVGT. Positions 107, 109, 134, and 136 each coordinate Zn(2+). Residues 251 to 255 carry the 'KMSKS' region motif; that stretch reads KLSKR. An ATP-binding site is contributed by Lys254.

Belongs to the class-I aminoacyl-tRNA synthetase family. Glutamate--tRNA ligase type 1 subfamily. As to quaternary structure, monomer. The cofactor is Zn(2+).

The protein resides in the cytoplasm. The enzyme catalyses tRNA(Glu) + L-glutamate + ATP = L-glutamyl-tRNA(Glu) + AMP + diphosphate. Its function is as follows. Catalyzes the attachment of glutamate to tRNA(Glu) in a two-step reaction: glutamate is first activated by ATP to form Glu-AMP and then transferred to the acceptor end of tRNA(Glu). In Stutzerimonas stutzeri (strain A1501) (Pseudomonas stutzeri), this protein is Glutamate--tRNA ligase.